The sequence spans 478 residues: MALPCKTGAAFKKYLLLLAQENCEFRLPEIKSLLSLYGGHFNNLQDEHGKSPFCILNLPSEEMARKLMKRTVCAKSVFELWGHGKTFMEFQQSVLSYPLENMMSYLQPNSTYKIIIHSFNKTLTQKEKLEKINTMEFIPFQGKVNLQNAENIFYLLEDYGSDPNKAPNEPFEIFFGRWIADGQRELINSYSVKKRHFIGNTSMDAGLSFIMANHARVKPNDVVFDPFVGTGGLLVSSAHFGAYVCGTEIDYNTVHGLGKATRMNQKWRGPDENIRANLRQYGLEKYYLDVLVSDASKPVWRKAPLFDAIITDPPYGIRESTRKTGTQKEIIKTELFPESHVPVQLNYHLSDIFSDLFAFASEFLVTGGRLVYWLPVYRPEYTEEVLPRHPCLKLISNCEQMLSSHTSRRLITMEKVKEFEEKYQYAHLGEGQNLPYKGHNSFREKYFSGLKKRTAREERARSEMANAENVKSKGKEDV.

The tract at residues 457–478 is disordered; sequence EERARSEMANAENVKSKGKEDV.

This sequence belongs to the class I-like SAM-binding methyltransferase superfamily. TRM11 methyltransferase family. In terms of assembly, part of the heterodimeric TRMT11-TRM112 methyltransferase complex; this complex forms an active tRNA methyltransferase, where TRMT112 acts as an activator of the catalytic subunit TRMT11.

It localises to the cytoplasm. The catalysed reaction is guanosine(10) in tRNA + S-adenosyl-L-methionine = N(2)-methylguanosine(10) in tRNA + S-adenosyl-L-homocysteine + H(+). Functionally, catalytic subunit of the TRMT11-TRM112 methyltransferase complex, that specifically mediates the S-adenosyl-L-methionine-dependent N(2)-methylation of guanosine nucleotide at position 10 (m2G10) in tRNAs. This is one of the major tRNA (guanine-N(2))-methyltransferases. This Xenopus laevis (African clawed frog) protein is tRNA (guanine(10)-N(2))-methyltransferase TRMT11 (trmt11.L).